The chain runs to 963 residues: Importin-13 (963 aa).

20 HEAT repeats span residues 24–54 (ENVE…QAQV), 56–88 (PQAW…KISR), 95–135 (TDQY…LSMM), 142–179 (AVAD…EFQT), 194–231 (LAVE…SWVQ), 236–268 (LQDC…NAIS), 276–325 (VNTL…ALLD), 330–372 (WQSF…DDIL), 375–438 (EAEK…YEML), 440–476 (AELL…FQSI), 487–522 (VVPG…WLAD), 524–558 (PVMI…CREC), 562–600 (LPPY…LLSA), 603–648 (VEEN…SNLF), 676–716 (PVVV…VKTL), 720–754 (FAPM…VHIF), 761–803 (FPPI…ALKR), 815–845 (VKAV…TELL), 860–893 (EDGR…FALN), and 897–931 (FSLL…QQIL). In terms of domain architecture, Importin N-terminal spans 45–111 (AQKWLMQAQV…KAHSFTQITR (67 aa)).

The protein belongs to the importin beta family. Interacts with UBC9, RAN, RBM8A, eIF-1A and PAX6. As to expression, expressed in fetal brain, heart, intestine and kidney.

Its subcellular location is the cytoplasm. The protein localises to the nucleus. Its function is as follows. Functions in nuclear protein import as nuclear transport receptor. Serves as receptor for nuclear localization signals (NLS) in cargo substrates. Is thought to mediate docking of the importin/substrate complex to the nuclear pore complex (NPC) through binding to nucleoporin and the complex is subsequently translocated through the pore by an energy requiring, Ran-dependent mechanism. At the nucleoplasmic side of the NPC, Ran binds to the importin, the importin/substrate complex dissociates and importin is re-exported from the nucleus to the cytoplasm where GTP hydrolysis releases Ran. The directionality of nuclear import is thought to be conferred by an asymmetric distribution of the GTP- and GDP-bound forms of Ran between the cytoplasm and nucleus. Mediates the nuclear import of UBC9, the RBM8A/MAGOH complex, PAX6 and probably other members of the paired homeobox family. Also mediates nuclear export of eIF-1A, and the cytoplasmic release of eIF-1A is triggered by the loading of import substrates onto IPO13. This is Importin-13 (Ipo13) from Rattus norvegicus (Rat).